Consider the following 98-residue polypeptide: Aspartyl/glutamyl-tRNA(Asn/Gln) amidotransferase subunit C (98 aa).

This sequence belongs to the GatC family. As to quaternary structure, heterotrimer of A, B and C subunits.

It carries out the reaction L-glutamyl-tRNA(Gln) + L-glutamine + ATP + H2O = L-glutaminyl-tRNA(Gln) + L-glutamate + ADP + phosphate + H(+). It catalyses the reaction L-aspartyl-tRNA(Asn) + L-glutamine + ATP + H2O = L-asparaginyl-tRNA(Asn) + L-glutamate + ADP + phosphate + 2 H(+). Its function is as follows. Allows the formation of correctly charged Asn-tRNA(Asn) or Gln-tRNA(Gln) through the transamidation of misacylated Asp-tRNA(Asn) or Glu-tRNA(Gln) in organisms which lack either or both of asparaginyl-tRNA or glutaminyl-tRNA synthetases. The reaction takes place in the presence of glutamine and ATP through an activated phospho-Asp-tRNA(Asn) or phospho-Glu-tRNA(Gln). In Micrococcus luteus (strain ATCC 4698 / DSM 20030 / JCM 1464 / CCM 169 / CCUG 5858 / IAM 1056 / NBRC 3333 / NCIMB 9278 / NCTC 2665 / VKM Ac-2230) (Micrococcus lysodeikticus), this protein is Aspartyl/glutamyl-tRNA(Asn/Gln) amidotransferase subunit C.